We begin with the raw amino-acid sequence, 100 residues long: Urease subunit gamma (100 aa).

It belongs to the urease gamma subunit family. As to quaternary structure, heterotrimer of UreA (gamma), UreB (beta) and UreC (alpha) subunits. Three heterotrimers associate to form the active enzyme.

The protein resides in the cytoplasm. The catalysed reaction is urea + 2 H2O + H(+) = hydrogencarbonate + 2 NH4(+). Its pathway is nitrogen metabolism; urea degradation; CO(2) and NH(3) from urea (urease route): step 1/1. The sequence is that of Urease subunit gamma from Nostoc sp. (strain PCC 7120 / SAG 25.82 / UTEX 2576).